Consider the following 514-residue polypeptide: Maltose/maltodextrin transport system permease protein MalF (514 aa).

Topologically, residues M1–S12 are cytoplasmic. A helical transmembrane segment spans residues P13–Y35. The Periplasmic portion of the chain corresponds to A36–E39. The helical transmembrane segment at Y40–F57 threads the bilayer. Topologically, residues S58–Y69 are cytoplasmic. The chain crosses the membrane as a helical span at residues P70 to T92. Residues N93–W283 lie on the Periplasmic side of the membrane. Positions F281–N505 constitute an ABC transmembrane type-1 domain. A helical transmembrane segment spans residues T284–V306. Residues Q307–R318 lie on the Cytoplasmic side of the membrane. A helical transmembrane segment spans residues V319–N341. Topologically, residues Q342 to R369 are periplasmic. A helical membrane pass occupies residues T370–L392. The Cytoplasmic segment spans residues K393–Q412. Residues N413–A435 traverse the membrane as a helical segment. Topologically, residues F436 to D483 are periplasmic. The helical transmembrane segment at F484–L506 threads the bilayer. Residues K507–D514 are Cytoplasmic-facing.

Belongs to the binding-protein-dependent transport system permease family. MalFG subfamily. The complex is composed of two ATP-binding proteins (MalK), two transmembrane proteins (MalG and MalF) and a solute-binding protein (MalE).

It localises to the cell inner membrane. Its function is as follows. Part of the ABC transporter complex MalEFGK involved in maltose/maltodextrin import. Probably responsible for the translocation of the substrate across the membrane. The sequence is that of Maltose/maltodextrin transport system permease protein MalF (malF) from Klebsiella aerogenes (Enterobacter aerogenes).